The chain runs to 821 residues: Putative outer membrane usher protein YqiG (821 aa).

A signal peptide spans 1–20 (MSGNIGANPVIIIGCASAYA). Cys798 and Cys817 are joined by a disulfide.

It belongs to the fimbrial export usher family.

Its subcellular location is the cell outer membrane. Its function is as follows. May be involved in H(2) production during fermentative growth. Involved in the export and assembly of a fimbrial subunit across the outer membrane. This chain is Putative outer membrane usher protein YqiG (yqiG), found in Escherichia coli (strain K12).